The chain runs to 20 residues: Hemocyanin subunit II (20 aa).

The interval 1-20 (DVVASSTAHKQQDINHLLDK) is disordered. Positions 10 to 20 (KQQDINHLLDK) are enriched in basic and acidic residues.

The protein belongs to the tyrosinase family. Hemocyanin subfamily. Composed of 3 major subunits (IB, II and III) and 1 minor subunit (IA) which form homohexamers and heterohexamers. May also form larger structures. In terms of tissue distribution, hemolymph.

It is found in the secreted. Its subcellular location is the extracellular space. Its function is as follows. Hemocyanins are copper-containing oxygen carriers occurring freely dissolved in the hemolymph of many mollusks and arthropods. The sequence is that of Hemocyanin subunit II from Panulirus japonicus (Japanese spiny lobster).